Consider the following 1241-residue polypeptide: Phosphorylase b kinase regulatory subunit alpha, skeletal muscle isoform (1241 aa).

A phosphoserine mark is found at Ser629, Ser730, Ser736, Ser739, Ser759, Ser812, Ser973, Ser982, and Ser986. Residues 811–841 form a calmodulin-binding region; it reads LSELYVKVGEIRHWGLIRYISGILRKKVEAL. Position 1008 is a phosphoserine; by autocatalysis (Ser1008). Ser1019 bears the Phosphoserine; by PKA mark. A phosphoserine mark is found at Ser1021 and Ser1024. Residues 1064 to 1104 are calmodulin-binding; that stretch reads SKDSRQGQWQRRRRLDGALNRVPIGFYQKVWKILQKCHGLS. Ser1131 bears the Phosphoserine mark. A lipid anchor (S-farnesyl cysteine) is attached at Cys1238.

Belongs to the phosphorylase b kinase regulatory chain family. Hexadecamer of 4 heterotetramers, each composed of alpha, beta, gamma, and delta subunits. Alpha (PHKA1 or PHKA2) and beta (PHKB) are regulatory subunits, gamma (PHKG1 or PHKG2) is the catalytic subunit, and delta is calmodulin. Although the final Cys may be farnesylated, the terminal tripeptide is probably not removed, and the C-terminus is not methylated. Both isoforms are expressed in muscle.

It localises to the cell membrane. Its pathway is glycan biosynthesis; glycogen metabolism. With respect to regulation, by phosphorylation of various serine residues and by calcium. Its function is as follows. Phosphorylase b kinase catalyzes the phosphorylation of serine in certain substrates, including troponin I. The alpha chain may bind calmodulin. This chain is Phosphorylase b kinase regulatory subunit alpha, skeletal muscle isoform (Phka1), found in Mus musculus (Mouse).